The sequence spans 359 residues: Histamine H2 receptor (359 aa).

Residues 1–22 (MAFNGTVPSFCMDFTVYKVTIS) lie on the Extracellular side of the membrane. Asn4 is a glycosylation site (N-linked (GlcNAc...) asparagine). A helical membrane pass occupies residues 23–44 (VILIILILVTVAGNVVVCLAVG). Over 45-57 (LNRRLRSLTNCFI) the chain is Cytoplasmic. Residues 58–81 (VSLAVTDLLLGLLVLPFSAIYQLS) form a helical membrane-spanning segment. The Extracellular portion of the chain corresponds to 82 to 92 (CKWSFSKVFCN). A disulfide bridge connects residues Cys91 and Cys174. A helical membrane pass occupies residues 93-114 (IYTSLDVMLCTASILNLFMISL). Residues 115-134 (DRYCAVTDPLRYPVLITPAR) lie on the Cytoplasmic side of the membrane. The chain crosses the membrane as a helical span at residues 135–159 (VAISLVFIWVISITLSFLSIHLGWN). Residues 160–180 (SRNETSKDNDTIVKCKVQVNE) are Extracellular-facing. The chain crosses the membrane as a helical span at residues 181–204 (VYGLVDGLVTFYLPLLIMCITYFR). Topologically, residues 205–234 (IFKIAREQARRINHIGSWKAATIREHKATV) are cytoplasmic. The chain crosses the membrane as a helical span at residues 235–258 (TLAAVMGAFIICWFPYFTVFVYRG). At 259–267 (LKGDDAVNE) the chain is on the extracellular side. The chain crosses the membrane as a helical span at residues 268-289 (VFEDVVLWLGYANSALNPILYA). Residues 290 to 359 (ALNRDFRTAY…VTAPQGATNR (70 aa)) lie on the Cytoplasmic side of the membrane. Residue Cys305 is the site of S-palmitoyl cysteine attachment.

It belongs to the G-protein coupled receptor 1 family.

The protein resides in the cell membrane. Its function is as follows. The H2 subclass of histamine receptors mediates gastric acid secretion. The activity of this receptor is mediated by G proteins which activate adenylyl cyclase. The sequence is that of Histamine H2 receptor (HRH2) from Cavia porcellus (Guinea pig).